A 454-amino-acid polypeptide reads, in one-letter code: Noelin-2 (454 aa).

An N-terminal signal peptide occupies residues 1 to 20 (MWPLTVPPPLLLLLCSGLAG). 2 coiled-coil regions span residues 58–85 (RDGR…LELR) and 136–193 (LEQY…AQKL). 6 N-linked (GlcNAc...) asparagine glycosylation sites follow: N74, N155, N275, N310, N399, and N441. One can recognise an Olfactomedin-like domain in the interval 194–446 (GCGKLTGVSN…QVLYNVTLFH (253 aa)). A disulfide bond links C195 and C377.

In terms of assembly, peripherally associated with AMPAR complex. AMPAR complex consists of an inner core made of 4 pore-forming GluA/GRIA proteins (GRIA1, GRIA2, GRIA3 and GRIA4) and 4 major auxiliary subunits arranged in a twofold symmetry. One of the two pairs of distinct binding sites is occupied either by CNIH2, CNIH3 or CACNG2, CACNG3. The other harbors CACNG2, CACNG3, CACNG4, CACNG8 or GSG1L. This inner core of AMPAR complex is complemented by outer core constituents binding directly to the GluA/GRIA proteins at sites distinct from the interaction sites of the inner core constituents. Outer core constituents include at least PRRT1, PRRT2, CKAMP44/SHISA9, FRRS1L and NRN1. The proteins of the inner and outer core serve as a platform for other, more peripherally associated AMPAR constituents, including OLFM2. Alone or in combination, these auxiliary subunits control the gating and pharmacology of the AMPAR complex and profoundly impact their biogenesis and protein processing. Interacts with GRIA2. Interacts with OLFM1 and OLFM3. Interacts with SRF; the interaction promotes dissociation of SRF from the transcriptional repressor HEY2. Interacts with RUNX2. N-glycosylated. In terms of tissue distribution, expressed in aortic smooth muscle (at protein level). In the fetus, expressed in the brain and ocular tissues including lens vesicle and optic cup.

It localises to the secreted. Its subcellular location is the synapse. It is found in the membrane. The protein localises to the nucleus. The protein resides in the cytoplasm. In terms of biological role, involved in transforming growth factor beta (TGF-beta)-induced smooth muscle differentiation. TGF-beta induces expression and translocation of OLFM2 to the nucleus where it binds to SRF, causing its dissociation from the transcriptional repressor HEY2/HERP1 and facilitating binding of SRF to target genes. Plays a role in AMPAR complex organization. Is a regulator of vascular smooth-muscle cell (SMC) phenotypic switching, that acts by promoting RUNX2 and inhibiting MYOCD binding to SRF. SMC phenotypic switching is the process through which vascular SMCs undergo transition between a quiescent contractile phenotype and a proliferative synthetic phenotype in response to pathological stimuli. SMC phenotypic plasticity is essential for vascular development and remodeling. This Homo sapiens (Human) protein is Noelin-2 (OLFM2).